Consider the following 150-residue polypeptide: Large ribosomal subunit protein uL22c (150 aa).

Belongs to the universal ribosomal protein uL22 family. As to quaternary structure, part of the 50S ribosomal subunit.

It localises to the plastid. The protein localises to the chloroplast. This protein binds specifically to 23S rRNA. Its function is as follows. The globular domain of the protein is located near the polypeptide exit tunnel on the outside of the subunit, while an extended beta-hairpin is found that lines the wall of the exit tunnel in the center of the 70S ribosome. The protein is Large ribosomal subunit protein uL22c (rpl22) of Fagopyrum esculentum subsp. ancestrale (Wild buckwheat).